Reading from the N-terminus, the 294-residue chain is Mitochondrial HMG-box protein CIM1 (294 aa).

The transit peptide at 1–90 (MKATLLLKAQ…RLYYASFCQS (90 aa)) directs the protein to the mitochondrion. An HMG-box A region spans residues 27–102 (NRTPYTAFQY…IDILNVSKIE (76 aa)). Positions 110-258 (PIPAMSEYLL…IQILQKNMDI (149 aa)) are HMG-box B.

It is found in the mitochondrion matrix. Its function is as follows. Mitochondrial HMG-box protein that limits the copy number of mitochondrial DNA (mtDNA), antagonizing HMG-box containing protein ABF2, a mtDNA packaging factor. The polypeptide is Mitochondrial HMG-box protein CIM1 (Saccharomyces cerevisiae (strain ATCC 204508 / S288c) (Baker's yeast)).